The chain runs to 160 residues: Sec-independent protein translocase protein TatB (160 aa).

A helical membrane pass occupies residues 1-21; sequence MFGMGFFEILVVLIVAIIFLG. The disordered stretch occupies residues 118–160; that stretch reads HLNEEVSNEEALNKEVSSDESPKEVQLTTDNNAKEHDKEKEHV. Composition is skewed to basic and acidic residues over residues 128–140 and 149–160; these read ALNKEVSSDESPK and NAKEHDKEKEHV.

Belongs to the TatB family. As to quaternary structure, the Tat system comprises two distinct complexes: a TatABC complex, containing multiple copies of TatA, TatB and TatC subunits, and a separate TatA complex, containing only TatA subunits. Substrates initially bind to the TatABC complex, which probably triggers association of the separate TatA complex to form the active translocon.

It localises to the cell inner membrane. Its function is as follows. Part of the twin-arginine translocation (Tat) system that transports large folded proteins containing a characteristic twin-arginine motif in their signal peptide across membranes. Together with TatC, TatB is part of a receptor directly interacting with Tat signal peptides. TatB may form an oligomeric binding site that transiently accommodates folded Tat precursor proteins before their translocation. The chain is Sec-independent protein translocase protein TatB from Helicobacter pylori (strain J99 / ATCC 700824) (Campylobacter pylori J99).